Here is a 240-residue protein sequence, read N- to C-terminus: Ubiquinone biosynthesis O-methyltransferase (240 aa).

S-adenosyl-L-methionine is bound by residues Arg-44, Gly-64, Asp-85, and Met-129.

This sequence belongs to the methyltransferase superfamily. UbiG/COQ3 family.

It catalyses the reaction a 3-demethylubiquinol + S-adenosyl-L-methionine = a ubiquinol + S-adenosyl-L-homocysteine + H(+). The catalysed reaction is a 3-(all-trans-polyprenyl)benzene-1,2-diol + S-adenosyl-L-methionine = a 2-methoxy-6-(all-trans-polyprenyl)phenol + S-adenosyl-L-homocysteine + H(+). It functions in the pathway cofactor biosynthesis; ubiquinone biosynthesis. Functionally, O-methyltransferase that catalyzes the 2 O-methylation steps in the ubiquinone biosynthetic pathway. The chain is Ubiquinone biosynthesis O-methyltransferase from Escherichia coli O6:H1 (strain CFT073 / ATCC 700928 / UPEC).